An 85-amino-acid chain; its full sequence is Probable [Fe-S]-dependent transcriptional repressor (85 aa).

Iron-sulfur cluster-binding residues include Cys-56, Cys-61, Cys-64, and Cys-71.

This sequence belongs to the FeoC family.

Functionally, may function as a transcriptional regulator that controls feoABC expression. The polypeptide is Probable [Fe-S]-dependent transcriptional repressor (Yersinia pseudotuberculosis serotype O:1b (strain IP 31758)).